We begin with the raw amino-acid sequence, 589 residues long: Formate--tetrahydrofolate ligase (589 aa).

Residue 74–81 (TPFGEGKS) participates in ATP binding.

Belongs to the formate--tetrahydrofolate ligase family.

It carries out the reaction (6S)-5,6,7,8-tetrahydrofolate + formate + ATP = (6R)-10-formyltetrahydrofolate + ADP + phosphate. The protein operates within one-carbon metabolism; tetrahydrofolate interconversion. This Thermodesulfovibrio yellowstonii (strain ATCC 51303 / DSM 11347 / YP87) protein is Formate--tetrahydrofolate ligase.